The following is a 267-amino-acid chain: L-aspartate dehydrogenase (267 aa).

Positions 124 and 190 each coordinate NAD(+). The active site involves histidine 220.

It belongs to the L-aspartate dehydrogenase family.

The enzyme catalyses L-aspartate + NADP(+) + H2O = oxaloacetate + NH4(+) + NADPH + H(+). It catalyses the reaction L-aspartate + NAD(+) + H2O = oxaloacetate + NH4(+) + NADH + H(+). It participates in cofactor biosynthesis; NAD(+) biosynthesis; iminoaspartate from L-aspartate (dehydrogenase route): step 1/1. In terms of biological role, specifically catalyzes the NAD or NADP-dependent dehydrogenation of L-aspartate to iminoaspartate. This is L-aspartate dehydrogenase from Pseudomonas aeruginosa (strain ATCC 15692 / DSM 22644 / CIP 104116 / JCM 14847 / LMG 12228 / 1C / PRS 101 / PAO1).